The sequence spans 308 residues: Pantothenate kinase (308 aa).

Position 93–100 (93–100 (GSVAVGKS)) interacts with ATP.

The protein belongs to the prokaryotic pantothenate kinase family.

The protein localises to the cytoplasm. It catalyses the reaction (R)-pantothenate + ATP = (R)-4'-phosphopantothenate + ADP + H(+). Its pathway is cofactor biosynthesis; coenzyme A biosynthesis; CoA from (R)-pantothenate: step 1/5. The polypeptide is Pantothenate kinase (Corynebacterium diphtheriae (strain ATCC 700971 / NCTC 13129 / Biotype gravis)).